A 37-amino-acid polypeptide reads, in one-letter code: Cytochrome b6-f complex subunit 5 (37 aa).

A helical transmembrane segment spans residues 5–25 (LLCGIVLGLIPVTLLGLFVAA).

It belongs to the PetG family. As to quaternary structure, the 4 large subunits of the cytochrome b6-f complex are cytochrome b6, subunit IV (17 kDa polypeptide, PetD), cytochrome f and the Rieske protein, while the 4 small subunits are PetG, PetL, PetM and PetN. The complex functions as a dimer.

The protein localises to the cellular thylakoid membrane. Its function is as follows. Component of the cytochrome b6-f complex, which mediates electron transfer between photosystem II (PSII) and photosystem I (PSI), cyclic electron flow around PSI, and state transitions. PetG is required for either the stability or assembly of the cytochrome b6-f complex. The polypeptide is Cytochrome b6-f complex subunit 5 (Synechococcus sp. (strain WH7803)).